A 361-amino-acid chain; its full sequence is MESKQKVRKELRTERPSIYSFEIEELKSWLSENGEKPFRAAQIFEWLYEKRVTSFEKMTNLSKELRTKLNEHFVLTTLKTAVKQTSQDGTMKFLFELHDGYTIETVLMRHEYGNSVCVTTQVGCRIGCTFCASTLGGLKRNLEAGEIVAQVVKVQQALDETDERVSSIVIMGIGEPFDNFQEMLAFLKIVNHDKGLNIGARHITVSTSGIIPKIYEFADEKLQINFAISLHAPNTEIRSRLMPINRAYKLPDLMKAVDYYIKKTGRRVTFEYGLFGGVNDQVEHAEELAELLKGIKCHVNLIPVNYVPERDYVRTPKEQIFAFEKTLKSHGVNVTIRREQGHDIDAACGQLRAKERQEETR.

Glutamate 104 functions as the Proton acceptor in the catalytic mechanism. One can recognise a Radical SAM core domain in the interval 110–343 (HEYGNSVCVT…VTIRREQGHD (234 aa)). An intrachain disulfide couples cysteine 117 to cysteine 348. Residues cysteine 124, cysteine 128, and cysteine 131 each coordinate [4Fe-4S] cluster. S-adenosyl-L-methionine is bound by residues 174–175 (GE), serine 206, 229–231 (SLH), and asparagine 305. Cysteine 348 serves as the catalytic S-methylcysteine intermediate.

The protein belongs to the radical SAM superfamily. RlmN family. [4Fe-4S] cluster is required as a cofactor.

The protein localises to the cytoplasm. The enzyme catalyses adenosine(2503) in 23S rRNA + 2 reduced [2Fe-2S]-[ferredoxin] + 2 S-adenosyl-L-methionine = 2-methyladenosine(2503) in 23S rRNA + 5'-deoxyadenosine + L-methionine + 2 oxidized [2Fe-2S]-[ferredoxin] + S-adenosyl-L-homocysteine. It carries out the reaction adenosine(37) in tRNA + 2 reduced [2Fe-2S]-[ferredoxin] + 2 S-adenosyl-L-methionine = 2-methyladenosine(37) in tRNA + 5'-deoxyadenosine + L-methionine + 2 oxidized [2Fe-2S]-[ferredoxin] + S-adenosyl-L-homocysteine. Functionally, specifically methylates position 2 of adenine 2503 in 23S rRNA and position 2 of adenine 37 in tRNAs. The protein is Probable dual-specificity RNA methyltransferase RlmN of Bacillus licheniformis (strain ATCC 14580 / DSM 13 / JCM 2505 / CCUG 7422 / NBRC 12200 / NCIMB 9375 / NCTC 10341 / NRRL NRS-1264 / Gibson 46).